The following is a 326-amino-acid chain: DNA-directed RNA polymerase subunit alpha (326 aa).

The segment at 1–232 is alpha N-terminal domain (alpha-NTD); sequence MQSATEFLKP…SQLSVFADLE (232 aa). An alpha C-terminal domain (alpha-CTD) region spans residues 246–326; the sequence is VDPLLLRPVD…NWPPAGLERP (81 aa).

It belongs to the RNA polymerase alpha chain family. Homodimer. The RNAP catalytic core consists of 2 alpha, 1 beta, 1 beta' and 1 omega subunit. When a sigma factor is associated with the core the holoenzyme is formed, which can initiate transcription.

The catalysed reaction is RNA(n) + a ribonucleoside 5'-triphosphate = RNA(n+1) + diphosphate. Functionally, DNA-dependent RNA polymerase catalyzes the transcription of DNA into RNA using the four ribonucleoside triphosphates as substrates. The protein is DNA-directed RNA polymerase subunit alpha of Thiobacillus denitrificans (strain ATCC 25259 / T1).